Consider the following 596-residue polypeptide: Protein kinase C iota type (596 aa).

Residues 1 to 12 show a composition bias toward polar residues; the sequence is MPTQRDSSTMSH. A disordered region spans residues 1–23; the sequence is MPTQRDSSTMSHTVAGGGSGDHS. P2 is subject to N-acetylproline. Residues 2-28 are required for interaction with RAB2; sequence PTQRDSSTMSHTVAGGGSGDHSHQVRV. The segment at 2–253 is regulatory domain; the sequence is PTQRDSSTMS…KASSSLGLQD (252 aa). A Phosphothreonine modification is found at T3. Residues S7 and S8 each carry the phosphoserine modification. T9 is modified (phosphothreonine). In terms of domain architecture, PB1 spans 25-108; that stretch reads QVRVKAYYRG…SELLIHVFPC (84 aa). Residues 72-91 are interaction with PARD6A; sequence DEEGDPCTVSSQLELEEAFR. The Pseudosubstrate signature appears at 125–134; sequence YRRGARRWRK. The Phorbol-ester/DAG-type zinc-finger motif lies at 140 to 190; it reads GHTFQAKRFNRRAHCAICTDRIWGLGRQGYKCINCKLLVHKKCHKLVTIEC. The disordered stretch occupies residues 221-246; that stretch reads PSSHESLDQVGEEKEAMNTRESGKAS. Residues 225 to 243 are compositionally biased toward basic and acidic residues; the sequence is ESLDQVGEEKEAMNTRESG. The region spanning 254–522 is the Protein kinase domain; the sequence is FDLLRVIGRG…FADIQGHPFF (269 aa). 260 to 268 provides a ligand contact to ATP; it reads IGRGSYAKV. A phosphotyrosine; by SRC mark is found at Y265 and Y280. Residue K283 participates in ATP binding. Position 334 is a phosphotyrosine; by SRC (Y334). D378 serves as the catalytic Proton acceptor. Phosphothreonine; by PDPK1 is present on T412. Residues 523–594 form the AGC-kinase C-terminal domain; sequence RNVDWDMMEQ…INPLLMSAEE (72 aa). Position 564 is a phosphothreonine (T564).

It belongs to the protein kinase superfamily. AGC Ser/Thr protein kinase family. PKC subfamily. Forms a complex with SQSTM1 and MP2K5. Interacts directly with SQSTM1. Interacts with IKBKB. Interacts with PARD6A, PARD6B and PARD6G. Part of a quaternary complex containing aPKC, PARD3, a PARD6 protein (PARD6A, PARD6B or PARD6G) and a GTPase protein (CDC42 or RAC1). Part of a complex with LLGL1 and PARD6B. Interacts with ADAP1/CENTA1. Interaction with SMG1, through the ZN-finger domain, activates the kinase activity. Interacts with CDK7. Forms a complex with RAB2A and GAPDH involved in recruitment onto the membrane of vesicular tubular clusters (VTCs). Interacts with ECT2 ('Thr-359' phosphorylated form). Interacts with VAMP2. Interacts with WDFY2 (via WD repeats 1-3). In terms of processing, phosphorylation at Thr-412 in the activation loop is not mandatory for activation. Upon neuronal growth factor (NGF) stimulation, phosphorylated by SRC at Tyr-265, Tyr-280 and Tyr-334. Phosphorylation at Tyr-265 facilitates binding to KPNB1/importin-beta regulating entry of PRKCI into the nucleus. Phosphorylation on Tyr-334 is important for NF-kappa-B stimulation. Phosphorylated at Thr-564 during the initial phase of long term potentiation.

It is found in the cytoplasm. The protein localises to the membrane. The protein resides in the endosome. Its subcellular location is the nucleus. It catalyses the reaction L-seryl-[protein] + ATP = O-phospho-L-seryl-[protein] + ADP + H(+). It carries out the reaction L-threonyl-[protein] + ATP = O-phospho-L-threonyl-[protein] + ADP + H(+). With respect to regulation, atypical PKCs (PRKCI and PRKCZ) exhibit an elevated basal enzymatic activity (that may be due to the interaction with SMG1 or SQSTM1) and are not regulated by diacylglycerol, phosphatidylserine, phorbol esters or calcium ions. Two specific sites, Thr-412 (activation loop of the kinase domain) and Thr-564 (turn motif), need to be phosphorylated for its full activation. Might also be a target for novel lipid activators that are elevated during nutrient-stimulated insulin secretion. Its function is as follows. Calcium- and diacylglycerol-independent serine/ threonine-protein kinase that plays a general protective role against apoptotic stimuli, is involved in NF-kappa-B activation, cell survival, differentiation and polarity, and contributes to the regulation of microtubule dynamics in the early secretory pathway. Is necessary for BCR-ABL oncogene-mediated resistance to apoptotic drug in leukemia cells, protecting leukemia cells against drug-induced apoptosis. In cultured neurons, prevents amyloid beta protein-induced apoptosis by interrupting cell death process at a very early step. In glioblastoma cells, may function downstream of phosphatidylinositol 3-kinase (PI(3)K) and PDPK1 in the promotion of cell survival by phosphorylating and inhibiting the pro-apoptotic factor BAD. Can form a protein complex in non-small cell lung cancer (NSCLC) cells with PARD6A and ECT2 and regulate ECT2 oncogenic activity by phosphorylation, which in turn promotes transformed growth and invasion. In response to nerve growth factor (NGF), acts downstream of SRC to phosphorylate and activate IRAK1, allowing the subsequent activation of NF-kappa-B and neuronal cell survival. Functions in the organization of the apical domain in epithelial cells by phosphorylating EZR. This step is crucial for activation and normal distribution of EZR at the early stages of intestinal epithelial cell differentiation. Forms a protein complex with LLGL1 and PARD6B independently of PARD3 to regulate epithelial cell polarity. Plays a role in microtubule dynamics in the early secretory pathway through interaction with RAB2A and GAPDH and recruitment to vesicular tubular clusters (VTCs). In human coronary artery endothelial cells (HCAEC), is activated by saturated fatty acids and mediates lipid-induced apoptosis. Involved in early synaptic long term potentiation phase in CA1 hippocampal cells and short term memory formation. The sequence is that of Protein kinase C iota type (PRKCI) from Pongo abelii (Sumatran orangutan).